We begin with the raw amino-acid sequence, 502 residues long: Cobyric acid synthase (502 aa).

A GATase cobBQ-type domain is found at 260–433 (ILRVAVCAIP…WHGSLESDGF (174 aa)). The active-site Nucleophile is cysteine 341. Residue histidine 425 is part of the active site.

It belongs to the CobB/CobQ family. CobQ subfamily.

It functions in the pathway cofactor biosynthesis; adenosylcobalamin biosynthesis. In terms of biological role, catalyzes amidations at positions B, D, E, and G on adenosylcobyrinic A,C-diamide. NH(2) groups are provided by glutamine, and one molecule of ATP is hydrogenolyzed for each amidation. The chain is Cobyric acid synthase from Streptomyces avermitilis (strain ATCC 31267 / DSM 46492 / JCM 5070 / NBRC 14893 / NCIMB 12804 / NRRL 8165 / MA-4680).